The chain runs to 439 residues: GTPase Obg (439 aa).

Residues 4 to 162 (IEFIDVVDIY…KHIQLELKLL (159 aa)) form the Obg domain. The OBG-type G domain occupies 163 to 336 (ADVGLIGYPN…LKYAMWDIIK (174 aa)). GTP-binding positions include 169–176 (GYPNVGKS), 194–198 (FTTLV), 218–221 (DIPG), 288–291 (NKSD), and 317–319 (SAV). S176 and T196 together coordinate Mg(2+). The 79-residue stretch at 361–439 (LVLPDRVDIK…VEGVDFIFKE (79 aa)) folds into the OCT domain.

This sequence belongs to the TRAFAC class OBG-HflX-like GTPase superfamily. OBG GTPase family. Monomer. Mg(2+) serves as cofactor.

It localises to the cytoplasm. Its function is as follows. An essential GTPase which binds GTP, GDP and possibly (p)ppGpp with moderate affinity, with high nucleotide exchange rates and a fairly low GTP hydrolysis rate. Plays a role in control of the cell cycle, stress response, ribosome biogenesis and in those bacteria that undergo differentiation, in morphogenesis control. The chain is GTPase Obg from Fervidobacterium nodosum (strain ATCC 35602 / DSM 5306 / Rt17-B1).